The chain runs to 411 residues: Inhibin beta B chain (411 aa).

An N-terminal signal peptide occupies residues 1 to 28 (MDGLPGRALGAACLLLLVAGWLGPEAWG). A disordered region spans residues 28-69 (GSPTPPPSPAAPPPPPPPGAPGGSQDTCTSCGGGGGGFRRPE). Residues 29-296 (SPTPPPSPAA…GDSRHRIRKR (268 aa)) constitute a propeptide that is removed on maturation. Residues 30-47 (PTPPPSPAAPPPPPPPGA) are compositionally biased toward pro residues. N-linked (GlcNAc...) asparagine glycosylation is present at Asn97. Intrachain disulfides connect Cys300-Cys308, Cys307-Cys376, Cys336-Cys408, and Cys340-Cys410.

The protein belongs to the TGF-beta family. As to quaternary structure, dimeric, linked by one or more disulfide bonds. Inhibin B is a dimer of alpha and beta-B. Activin B is a homodimer of beta-B. Activin AB is a dimer of beta-A and beta-B. Interacts with FST and FSTL3. Activin B interacts with BMPR2. As to expression, uterus, testis, ovary, lung, kidney, brain, CJ7 embryonic stem cells, and possibly in liver.

It localises to the secreted. Inhibins and activins inhibit and activate, respectively, the secretion of follitropin by the pituitary gland. Inhibins/activins are involved in regulating a number of diverse functions such as hypothalamic and pituitary hormone secretion, gonadal hormone secretion, germ cell development and maturation, erythroid differentiation, insulin secretion, nerve cell survival, embryonic axial development or bone growth, depending on their subunit composition. Inhibins appear to oppose the functions of activins. Its function is as follows. Activin B is a dimer of alpha and beta-B that plays a role in several essential biological processes including embryonic development, stem cell maintenance and differentiation, haematopoiesis, cell proliferation and wound healing. Signals through type I receptor ACVR1C, abundantly expressed in pancreatic beta cells, and type II receptors like ACVR2A. Upon ligand binding, these receptors phosphorylate intracellular signaling mediators SMAD2 and SMAD3, which form a complex with SMAD4, translocate to the nucleus, and regulate gene expression. Plays a crucial role in the induction of hepcidin by inflammation through activation of ACVR1C and subsequent phosphorylation of SMAD1/5/8. Regulates adipocyte lipid metabolism by decreasing non-esterified fatty acids and glycerol release and increases intracellular triglyceride content. Stimulates wound healing by promoting cell migration and hair follicle regeneration through the JNK and ERK signaling pathways downstream of RHOA. Functionally, inhibin B is a dimer of alpha and beta-B that plays a crucial role in the regulation of the reproductive system by inhibiting the secretion of follicle-stimulating hormone (FSH) from the anterior pituitary gland. Thereby, maintains reproductive homeostasis in both males and females. Acts as a more potent suppressor of FSH release than inhibin A. Functions as competitive receptor antagonist binding activin type II receptors with high affinity in the presence of the TGF-beta type III coreceptor/TGFBR3L. In Mus musculus (Mouse), this protein is Inhibin beta B chain (Inhbb).